Consider the following 276-residue polypeptide: Rhomboid protease GlpG (276 aa).

The next 6 helical transmembrane spans lie at 94-114 (GPFT…QNLL), 142-162 (AFMH…WYLG), 169-189 (IGSG…GFVQ), 192-212 (FSGP…GYVW), 229-249 (LILF…GMAI), and 252-272 (GAHV…TLHG). The active-site Nucleophile is the Ser-201. His-254 is an active-site residue.

Belongs to the peptidase S54 family.

It is found in the cell inner membrane. The catalysed reaction is Cleaves type-1 transmembrane domains using a catalytic dyad composed of serine and histidine that are contributed by different transmembrane domains.. In terms of biological role, rhomboid-type serine protease that catalyzes intramembrane proteolysis. This is Rhomboid protease GlpG from Klebsiella pneumoniae subsp. pneumoniae (strain ATCC 700721 / MGH 78578).